Here is a 324-residue protein sequence, read N- to C-terminus: Glutaminase 2 (324 aa).

Substrate contacts are provided by serine 75, asparagine 127, glutamate 171, asparagine 178, tyrosine 202, tyrosine 254, and valine 272.

The protein belongs to the glutaminase family. As to quaternary structure, homotetramer.

The catalysed reaction is L-glutamine + H2O = L-glutamate + NH4(+). The sequence is that of Glutaminase 2 from Halalkalibacterium halodurans (strain ATCC BAA-125 / DSM 18197 / FERM 7344 / JCM 9153 / C-125) (Bacillus halodurans).